The sequence spans 336 residues: Dihydroorotate dehydrogenase (quinone) (336 aa).

FMN contacts are provided by residues 62–66 (AGLDK) and T86. Residue K66 participates in substrate binding. 111-115 (NRMGF) is a binding site for substrate. The FMN site is built by N139 and N172. N172 lines the substrate pocket. S175 acts as the Nucleophile in catalysis. N177 serves as a coordination point for substrate. K217 and T245 together coordinate FMN. Position 246–247 (246–247 (NT)) interacts with substrate. FMN contacts are provided by residues G268, G297, and 318 to 319 (YS).

This sequence belongs to the dihydroorotate dehydrogenase family. Type 2 subfamily. In terms of assembly, monomer. Requires FMN as cofactor.

It is found in the cell membrane. The catalysed reaction is (S)-dihydroorotate + a quinone = orotate + a quinol. The protein operates within pyrimidine metabolism; UMP biosynthesis via de novo pathway; orotate from (S)-dihydroorotate (quinone route): step 1/1. Catalyzes the conversion of dihydroorotate to orotate with quinone as electron acceptor. The sequence is that of Dihydroorotate dehydrogenase (quinone) from Pectobacterium carotovorum subsp. carotovorum (strain PC1).